A 1284-amino-acid polypeptide reads, in one-letter code: Collagen alpha-1(XX) chain (1284 aa).

The first 22 residues, 1-22 (MSSGDPAHLGLCLWLWLGATLG), serve as a signal peptide directing secretion. Positions 28–119 (ASGLLRLAVL…EFVIEDLKSS (92 aa)) constitute a Fibronectin type-III 1 domain. The segment at 122-171 (DRSSQRPLGSGAPEPTPSHTGSPDPEQASEPQVAFTPSQDPRTPAGPQFR) is disordered. Residues 179–354 (DMVFLVDGSW…GALAGLLSRL (176 aa)) form the VWFA domain. Fibronectin type-III domains lie at 379–468 (APTS…APLP), 469–559 (PPRA…TLAP), 560–647 (PRHL…TKKA), 649–738 (SPSQ…TPST), and 743–833 (PPSN…ACPA). N-linked (GlcNAc...) asparagine glycosylation occurs at asparagine 607. Residues 842–1037 (GFDLMVAFSL…LQMLQIVCSD (196 aa)) enclose the Laminin G-like domain. Disordered regions lie at residues 1065 to 1190 (SCSS…EKGE) and 1212 to 1284 (SFHE…GLWE). Residues 1071–1082 (PGPPGPQGPPGL) show a composition bias toward pro residues. Collagen-like domains are found at residues 1071 to 1127 (PGPP…IPGR) and 1133 to 1190 (PKGM…EKGE). Composition is skewed to low complexity over residues 1112 to 1125 (LPGLQGHPGHQGIP) and 1166 to 1181 (ERGPPGTVGPTGLPGP). Residues 1271-1284 (SPGQQGASTQGLWE) show a composition bias toward polar residues.

As to expression, high expression in heart, lung, liver, skeletal muscle, kidney, pancreas, spleen, testis, ovary, subthalamic nucleus and fetal liver. Weak expression in other tissues tested.

The protein resides in the secreted. The protein localises to the extracellular space. Functionally, probable collagen protein. This is Collagen alpha-1(XX) chain (COL20A1) from Homo sapiens (Human).